Here is a 374-residue protein sequence, read N- to C-terminus: Spore germination protein GerLB (374 aa).

Helical transmembrane passes span 16-36, 44-64, 86-106, 122-142, 149-169, 192-212, 227-247, 279-301, 313-333, and 341-361; these read IGFA…PRDI, DGWI…WFVT, PVAY…TAYE, TPIQ…IAGS, LNVL…LLNI, VKNS…AVLL, AVMV…SVFT, FFTT…ASLL, IFIF…SSLN, and YLAW…LIVY.

This sequence belongs to the amino acid-polyamine-organocation (APC) superfamily. Spore germination protein (SGP) (TC 2.A.3.9) family.

The protein localises to the membrane. Contributes to the L-alanine germination response. This Bacillus cereus protein is Spore germination protein GerLB (gerLB).